The sequence spans 143 residues: Lutropin subunit beta (143 aa).

Residues 1–22 (MEMLQGLLLLWLLLLNVGGVWT) form the signal peptide. Disulfide bonds link Cys-31–Cys-79, Cys-45–Cys-94, Cys-48–Cys-132, Cys-56–Cys-110, Cys-60–Cys-112, and Cys-115–Cys-122. Asn-35 is a glycosylation site (N-linked (GlcNAc...) asparagine).

It belongs to the glycoprotein hormones subunit beta family. In terms of assembly, heterodimer of a common alpha chain and a unique beta chain which confers biological specificity to thyrotropin, lutropin, follitropin and gonadotropin.

Its subcellular location is the secreted. Functionally, promotes spermatogenesis and ovulation by stimulating the testes and ovaries to synthesize steroids. This chain is Lutropin subunit beta (LHB), found in Felis catus (Cat).